Here is a 333-residue protein sequence, read N- to C-terminus: Flap endonuclease 1 (333 aa).

The N-domain stretch occupies residues 1–99; sequence MGVAIRDILA…ETINERREHR (99 aa). Residues Asp-28, Asp-81, Glu-153, Glu-155, Asp-174, Asp-176, and Asp-235 each contribute to the Mg(2+) site. An I-domain region spans residues 117–255; it reads EAYKQASASA…KTALKIVRNG (139 aa). An interaction with PCNA region spans residues 325-333; that stretch reads TQKTLDAWF.

It belongs to the XPG/RAD2 endonuclease family. FEN1 subfamily. Interacts with PCNA. PCNA stimulates the nuclease activity without altering cleavage specificity. Mg(2+) serves as cofactor.

Its function is as follows. Structure-specific nuclease with 5'-flap endonuclease and 5'-3' exonuclease activities involved in DNA replication and repair. During DNA replication, cleaves the 5'-overhanging flap structure that is generated by displacement synthesis when DNA polymerase encounters the 5'-end of a downstream Okazaki fragment. Binds the unpaired 3'-DNA end and kinks the DNA to facilitate 5' cleavage specificity. Cleaves one nucleotide into the double-stranded DNA from the junction in flap DNA, leaving a nick for ligation. Also involved in the base excision repair (BER) pathway. Acts as a genome stabilization factor that prevents flaps from equilibrating into structures that lead to duplications and deletions. Also possesses 5'-3' exonuclease activity on nicked or gapped double-stranded DNA. The chain is Flap endonuclease 1 from Methanoculleus marisnigri (strain ATCC 35101 / DSM 1498 / JR1).